A 379-amino-acid polypeptide reads, in one-letter code: Cobalt-precorrin-5B C(1)-methyltransferase (379 aa).

This sequence belongs to the CbiD family.

It carries out the reaction Co-precorrin-5B + S-adenosyl-L-methionine = Co-precorrin-6A + S-adenosyl-L-homocysteine. It participates in cofactor biosynthesis; adenosylcobalamin biosynthesis; cob(II)yrinate a,c-diamide from sirohydrochlorin (anaerobic route): step 6/10. Its function is as follows. Catalyzes the methylation of C-1 in cobalt-precorrin-5B to form cobalt-precorrin-6A. This Salmonella dublin (strain CT_02021853) protein is Cobalt-precorrin-5B C(1)-methyltransferase.